Reading from the N-terminus, the 621-residue chain is KIF-binding protein (621 aa).

A disordered region spans residues 51-75; the sequence is GPAPEDEDERPEAEDGPGAGDHALG. Residues 54 to 65 are compositionally biased toward acidic residues; it reads PEDEDERPEAED. Ser178 carries the phosphoserine modification.

The protein belongs to the KIF-binding protein family. In terms of assembly, interacts with KIF1B; positively regulates KIF1B microtubule motor activity. Interacts with STMN2. As to expression, highly expressed in heart, brain, ovary, testis, spinal cord and all specific brain regions examined. Moderate expressed at intermediate level in all other adult tissues examined, as well as in fetal liver and brain. Not expressed in blood leukocytes.

The protein resides in the cytoplasm. It localises to the cytoskeleton. In terms of biological role, activator of KIF1B plus-end-directed microtubule motor activity. Required for organization of axonal microtubules, and axonal outgrowth and maintenance during peripheral and central nervous system development. The sequence is that of KIF-binding protein from Homo sapiens (Human).